We begin with the raw amino-acid sequence, 308 residues long: uncharacterized protein (308 aa).

Transmembrane regions (helical) follow at residues 6-26, 31-51, 63-83, 100-120, 128-148, 162-182, 195-215, 221-241, 257-277, and 287-307; these read VVLI…FGIL, AKIL…FLTI, FLKL…LAYL, ILVS…LGMF, AIFC…YVGI, MAKF…FFGF, LNYL…LSLS, FGVF…PATA, VLLV…GTLY, and SIFI…WILL.

The protein belongs to the auxin efflux carrier (TC 2.A.69) family.

The protein localises to the cell membrane. This is an uncharacterized protein from Methanocaldococcus jannaschii (strain ATCC 43067 / DSM 2661 / JAL-1 / JCM 10045 / NBRC 100440) (Methanococcus jannaschii).